The primary structure comprises 117 residues: Gamma-aminobutyric acid receptor-associated protein (117 aa).

Residues 1-22 are interaction with beta-tubulin; it reads MKFVYKEEHPFEKRRSEGEKIR. Residues 36-68 are interaction with GABRG2; sequence APKARIGDLDKKKYLVPSDLTVGQFYFLIRKRI. The interval 36 to 117 is interaction with GPHN; sequence APKARIGDLD…AYSDESVYGL (82 aa). Residues 48–50 are interaction with LIR (LC3 nteracting Region) motif of ATG3; sequence KYL. Glycine 116 carries the Phosphatidylethanolamine amidated glycine; alternate lipid modification. Glycine 116 carries the Phosphatidylserine amidated glycine; alternate lipid modification. Residue leucine 117 is a propeptide, removed in mature form.

It belongs to the ATG8 family. Interacts with GPHN and NSF. Interacts with ATG3, ATG7 and ATG13. Interacts with alpha-tubulin. Interacts with beta-tubulin. Interacts with GABRG2. Interacts with RB1CC1. Interacts with ULK1. Interacts with CALR. Interacts with DDX47. Interacts with TP53INP1 and TP53INP2. Interacts with TBC1D5. Interacts with TBC1D25. Directly interacts with SQSTM1. Interacts with MAPK15. Interacts with TECPR2. Interacts with PCM1. Interacts with TRIM5 and TRIM21. Interacts with MEFV. Interacts with KIF21B. Interacts with WDFY3; this interaction is required for WDFY3 recruitment to MAP1LC3B-positive p62/SQSTM1 bodies. Interacts with FLCN; interaction regulates autophagy. Interacts with UBA5. Interacts with KBTBD6 and KBTBD7; the interaction is direct and required for the ubiquitination of TIAM1. Interacts with reticulophagy regulators RETREG1, RETREG2 and RETREG3. Interacts with IRGM. Interacts with STX17. Interacts with CT55; this interaction may be important for GABARAP protein stability. Interacts with DNM2. Interacts with NCOA4 (via C-terminus). Post-translationally, the precursor molecule is cleaved by ATG4 (ATG4A, ATG4B, ATG4C or ATG4D) to expose the glycine at the C-terminus and form the cytosolic form, GABARAP-I. The processed form is then activated by APG7L/ATG7, transferred to ATG3 and conjugated to phosphatidylethanolamine (PE) phospholipid to form the membrane-bound form, GABARAP-II. During non-canonical autophagy, the processed form is conjugated to phosphatidylserine (PS) phospholipid. ATG4 proteins also mediate the delipidation of PE-conjugated forms. In addition, ATG4B and ATG4D mediate delipidation of ATG8 proteins conjugated to PS during non-canonical autophagy. ATG4B constitutes the major protein for proteolytic activation. ATG4D is the main enzyme for delipidation activity. As to expression, expressed in brain (at protein level). Can be found in both somatodendritic and axonal compartment of neurons.

It localises to the cytoplasmic vesicle. The protein localises to the autophagosome membrane. The protein resides in the endomembrane system. It is found in the cytoplasm. Its subcellular location is the cytoskeleton. It localises to the golgi apparatus membrane. Ubiquitin-like modifier that plays a role in intracellular transport of GABA(A) receptors and its interaction with the cytoskeleton. Involved in autophagy: while LC3s are involved in elongation of the phagophore membrane, the GABARAP/GATE-16 subfamily is essential for a later stage in autophagosome maturation. Through its interaction with the reticulophagy receptor TEX264, participates in the remodeling of subdomains of the endoplasmic reticulum into autophagosomes upon nutrient stress, which then fuse with lysosomes for endoplasmic reticulum turnover. Also required for the local activation of the CUL3(KBTBD6/7) E3 ubiquitin ligase complex, regulating ubiquitination a nd degradation of TIAM1, a guanyl-nucleotide exchange factor (GEF) that activates RAC1 and downstream signal transduction. Thereby, regulates different biological processes including the organization of the cytoskeleton, cell migration and proliferation. Involved in apoptosis. The sequence is that of Gamma-aminobutyric acid receptor-associated protein from Rattus norvegicus (Rat).